Reading from the N-terminus, the 462-residue chain is ATP-dependent protease ATPase subunit HslU (462 aa).

ATP is bound by residues I21, 63–68 (GVGKTE), D275, E340, and R412.

Belongs to the ClpX chaperone family. HslU subfamily. In terms of assembly, a double ring-shaped homohexamer of HslV is capped on each side by a ring-shaped HslU homohexamer. The assembly of the HslU/HslV complex is dependent on binding of ATP.

Its subcellular location is the cytoplasm. ATPase subunit of a proteasome-like degradation complex; this subunit has chaperone activity. The binding of ATP and its subsequent hydrolysis by HslU are essential for unfolding of protein substrates subsequently hydrolyzed by HslV. HslU recognizes the N-terminal part of its protein substrates and unfolds these before they are guided to HslV for hydrolysis. The sequence is that of ATP-dependent protease ATPase subunit HslU from Pseudothermotoga lettingae (strain ATCC BAA-301 / DSM 14385 / NBRC 107922 / TMO) (Thermotoga lettingae).